The primary structure comprises 294 residues: Methionine aminopeptidase (294 aa).

His-65 is a substrate binding site. A divalent metal cation contacts are provided by Asp-85, Asp-96, and His-156. His-164 is a binding site for substrate. Glu-189 and Glu-279 together coordinate a divalent metal cation.

It belongs to the peptidase M24A family. Methionine aminopeptidase archaeal type 2 subfamily. In terms of assembly, monomer. The cofactor is Co(2+). Requires Zn(2+) as cofactor. Mn(2+) serves as cofactor. It depends on Fe(2+) as a cofactor.

It catalyses the reaction Release of N-terminal amino acids, preferentially methionine, from peptides and arylamides.. Its function is as follows. Removes the N-terminal methionine from nascent proteins. The N-terminal methionine is often cleaved when the second residue in the primary sequence is small and uncharged (Met-Ala-, Cys, Gly, Pro, Ser, Thr, or Val). In Methanocaldococcus jannaschii (strain ATCC 43067 / DSM 2661 / JAL-1 / JCM 10045 / NBRC 100440) (Methanococcus jannaschii), this protein is Methionine aminopeptidase.